The following is a 419-amino-acid chain: Effector protein BipC (419 aa).

2 disordered regions span residues 62–91 and 338–402; these read VAGS…TVSG and LQSG…AKSQ. Composition is skewed to basic and acidic residues over residues 71 to 91 and 380 to 392; these read ELAR…TVSG and TRDE…REAA.

It belongs to the SctB/SipC family.

The protein resides in the secreted. This is Effector protein BipC (bipC) from Burkholderia mallei (strain NCTC 10247).